A 137-amino-acid chain; its full sequence is Transcription antitermination protein NusB (137 aa).

It belongs to the NusB family.

Functionally, involved in transcription antitermination. Required for transcription of ribosomal RNA (rRNA) genes. Binds specifically to the boxA antiterminator sequence of the ribosomal RNA (rrn) operons. The polypeptide is Transcription antitermination protein NusB (Haemophilus ducreyi (strain 35000HP / ATCC 700724)).